The chain runs to 364 residues: Poly(3-hydroxyalkanoate) polymerase subunit PhaE (364 aa).

Residues 322-364 (SGKTPTTALKAPAPATKATEKPATRATTRRKTAAKPTGGTADD) are disordered. The span at 324–338 (KTPTTALKAPAPATK) shows a compositional bias: low complexity.

It belongs to the PHA/PHB synthase family. Type III PhaE subfamily. As to quaternary structure, forms a heterodimer with PhaC, which may multimerize in the presence of 3-hydroxybutyryl-CoA.

Its subcellular location is the cytoplasm. The protein operates within biopolymer metabolism; poly-(R)-3-hydroxybutanoate biosynthesis. Polymerizes D(-)-3-hydroxybutyryl-CoA to create polyhydroxybutyrate (PHB) which consists of thousands of hydroxybutyrate molecules linked end to end. This subunit has no catalytic activity but enhances the activity of PhaC, the catalytic subunit. This chain is Poly(3-hydroxyalkanoate) polymerase subunit PhaE, found in Thiocystis violacea.